The chain runs to 157 residues: Transcriptional repressor NrdR (157 aa).

A disordered region spans residues 1–22; that stretch reads MRCPKCGATKSSVIDSRQAEEG. A zinc finger lies at 3 to 34; it reads CPKCGATKSSVIDSRQAEEGNTIRRRRECDEC. Residues 49-139 enclose the ATP-cone domain; it reads LVVVKKDGTR…VYRSFKDVSE (91 aa).

The protein belongs to the NrdR family. It depends on Zn(2+) as a cofactor.

In terms of biological role, negatively regulates transcription of bacterial ribonucleotide reductase nrd genes and operons by binding to NrdR-boxes. This chain is Transcriptional repressor NrdR, found in Streptococcus pneumoniae (strain Hungary19A-6).